The chain runs to 347 residues: Spermidine/putrescine import ATP-binding protein PotA (347 aa).

Residues 6–236 (IELRDISKHY…PKNSFVAKFI (231 aa)) enclose the ABC transporter domain. 38-45 (GPSGCGKT) is an ATP binding site.

This sequence belongs to the ABC transporter superfamily. Spermidine/putrescine importer (TC 3.A.1.11.1) family. As to quaternary structure, the complex is composed of two ATP-binding proteins (PotA), two transmembrane proteins (PotB and PotC) and a solute-binding protein (PotD).

The protein resides in the cell membrane. It carries out the reaction ATP + H2O + polyamine-[polyamine-binding protein]Side 1 = ADP + phosphate + polyamineSide 2 + [polyamine-binding protein]Side 1.. Its function is as follows. Part of the ABC transporter complex PotABCD involved in spermidine/putrescine import. Responsible for energy coupling to the transport system. The polypeptide is Spermidine/putrescine import ATP-binding protein PotA (Clostridioides difficile (strain 630) (Peptoclostridium difficile)).